The chain runs to 125 residues: Small ribosomal subunit protein eS25 (125 aa).

Residues 1 to 23 (MPPKDDKKKKDAGKSAKKDKDPV) show a composition bias toward basic and acidic residues. Residues 1-38 (MPPKDDKKKKDAGKSAKKDKDPVNKSGGKAKKKKWSKG) are disordered. A compositionally biased stretch (basic residues) spans 28–38 (GKAKKKKWSKG). K43 is modified (N6-acetyllysine). K52 carries the N6-acetyllysine; alternate modification. K52 bears the N6-succinyllysine; alternate mark. K60 and K66 each carry N6-acetyllysine. K94 carries the post-translational modification N6-acetyllysine; alternate. At K94 the chain carries N6-succinyllysine; alternate.

It belongs to the eukaryotic ribosomal protein eS25 family. In terms of assembly, component of the small ribosomal subunit.

The protein resides in the cytoplasm. In terms of biological role, component of the small ribosomal subunit. The ribosome is a large ribonucleoprotein complex responsible for the synthesis of proteins in the cell. The protein is Small ribosomal subunit protein eS25 (RPS25) of Homo sapiens (Human).